The chain runs to 194 residues: 23 kDa U4/U6.U5 small nuclear ribonucleoprotein component (194 aa).

The segment at phenylalanine 80–histidine 104 adopts a C2H2-type zinc-finger fold.

Component of the U4/U6-U5 tri-snRNP complex composed of the U4, U6 and U5 snRNAs and at least PRP3, PRP4, PRP6, PRP8, PRP18, PRP31, PRP38, SNU13, SNU23, SNU66, SNU114, SPP381, SMB1, SMD1, SMD2, SMD3, SMX2, SMX3, LSM2, LSM3, LSM4, LSM5, LSM6, LSM7, LSM8, BRR2 and DIB1.

It localises to the nucleus. In terms of biological role, participates in pre-mRNA splicing. Part of the U4/U5/U6 tri-snRNP complex, one of the building blocks of the spliceosome. The chain is 23 kDa U4/U6.U5 small nuclear ribonucleoprotein component (SNU23) from Saccharomyces cerevisiae (strain ATCC 204508 / S288c) (Baker's yeast).